Consider the following 90-residue polypeptide: Small ribosomal subunit protein uS15 (90 aa).

This sequence belongs to the universal ribosomal protein uS15 family. Part of the 30S ribosomal subunit. Forms a bridge to the 50S subunit in the 70S ribosome, contacting the 23S rRNA.

One of the primary rRNA binding proteins, it binds directly to 16S rRNA where it helps nucleate assembly of the platform of the 30S subunit by binding and bridging several RNA helices of the 16S rRNA. In terms of biological role, forms an intersubunit bridge (bridge B4) with the 23S rRNA of the 50S subunit in the ribosome. This chain is Small ribosomal subunit protein uS15, found in Thermotoga maritima (strain ATCC 43589 / DSM 3109 / JCM 10099 / NBRC 100826 / MSB8).